The chain runs to 314 residues: Ribosomal RNA small subunit methyltransferase H (314 aa).

S-adenosyl-L-methionine contacts are provided by residues 33 to 35 (GGH), D52, F84, D105, and Q112.

Belongs to the methyltransferase superfamily. RsmH family.

The protein localises to the cytoplasm. It carries out the reaction cytidine(1402) in 16S rRNA + S-adenosyl-L-methionine = N(4)-methylcytidine(1402) in 16S rRNA + S-adenosyl-L-homocysteine + H(+). Specifically methylates the N4 position of cytidine in position 1402 (C1402) of 16S rRNA. This Lactobacillus delbrueckii subsp. bulgaricus (strain ATCC 11842 / DSM 20081 / BCRC 10696 / JCM 1002 / NBRC 13953 / NCIMB 11778 / NCTC 12712 / WDCM 00102 / Lb 14) protein is Ribosomal RNA small subunit methyltransferase H.